We begin with the raw amino-acid sequence, 886 residues long: Alanine--tRNA ligase (886 aa).

Zn(2+)-binding residues include His564, His568, Cys676, and His680.

This sequence belongs to the class-II aminoacyl-tRNA synthetase family. Zn(2+) is required as a cofactor.

It localises to the cytoplasm. The enzyme catalyses tRNA(Ala) + L-alanine + ATP = L-alanyl-tRNA(Ala) + AMP + diphosphate. In terms of biological role, catalyzes the attachment of alanine to tRNA(Ala) in a two-step reaction: alanine is first activated by ATP to form Ala-AMP and then transferred to the acceptor end of tRNA(Ala). Also edits incorrectly charged Ser-tRNA(Ala) and Gly-tRNA(Ala) via its editing domain. The sequence is that of Alanine--tRNA ligase from Bartonella bacilliformis (strain ATCC 35685 / KC583 / Herrer 020/F12,63).